The following is a 43-amino-acid chain: Protein PsbN (43 aa).

The chain crosses the membrane as a helical span at residues 5–27; sequence TLVAISISGLLVSFTGYALYTAF.

The protein belongs to the PsbN family.

It localises to the plastid. The protein resides in the chloroplast thylakoid membrane. Functionally, may play a role in photosystem I and II biogenesis. This is Protein PsbN from Coelogyne cristata (Orchid).